We begin with the raw amino-acid sequence, 297 residues long: Putative S-adenosyl-L-methionine-dependent methyltransferase Mjls_1072 (297 aa).

Residues aspartate 124 and 153-154 (DL) contribute to the S-adenosyl-L-methionine site.

This sequence belongs to the UPF0677 family.

Exhibits S-adenosyl-L-methionine-dependent methyltransferase activity. This chain is Putative S-adenosyl-L-methionine-dependent methyltransferase Mjls_1072, found in Mycobacterium sp. (strain JLS).